Consider the following 505-residue polypeptide: RNA-splicing ligase RtcB homolog (505 aa).

Residues D119, C122, H227, and H259 each coordinate Mn(2+). GMP is bound at residue 226-230; that stretch reads NHYAE. Phosphoserine is present on S300. H353 provides a ligand contact to Mn(2+). Residues 353–354, 402–405, S409, and 428–431 each bind GMP; these read HN, GGTM, and HGAG. The active-site GMP-histidine intermediate is the H428. A Glycyl lysine isopeptide (Lys-Gly) (interchain with G-Cter in SUMO2) cross-link involves residue K496. K504 provides a ligand contact to GMP.

It belongs to the RtcB family. Catalytic component of the tRNA-splicing ligase complex. Mn(2+) is required as a cofactor.

The protein localises to the nucleus. Its subcellular location is the cytoplasm. The catalysed reaction is a 3'-end 3'-phospho-ribonucleotide-RNA + a 5'-end dephospho-ribonucleoside-RNA + GTP = a ribonucleotidyl-ribonucleotide-RNA + GMP + diphosphate. The enzyme catalyses a 3'-end 2',3'-cyclophospho-ribonucleotide-RNA + a 5'-end dephospho-ribonucleoside-RNA + GTP + H2O = a ribonucleotidyl-ribonucleotide-RNA + GMP + diphosphate + H(+). Its function is as follows. Catalytic subunit of the tRNA-splicing ligase complex that acts by directly joining spliced tRNA halves to mature-sized tRNAs by incorporating the precursor-derived splice junction phosphate into the mature tRNA as a canonical 3',5'-phosphodiester. May act as an RNA ligase with broad substrate specificity, and may function toward other RNAs. In Rattus norvegicus (Rat), this protein is RNA-splicing ligase RtcB homolog.